A 635-amino-acid polypeptide reads, in one-letter code: Glutamine sensor PIB2 (635 aa).

The disordered stretch occupies residues 1–110 (MTALHSVSKT…GTGFVDRKQQ (110 aa)). The tract at residues 1-164 (MTALHSVSKT…KTLPFTDDQR (164 aa)) is may play a role in attenuating TORC1 signaling. A compositionally biased stretch (basic and acidic residues) spans 33 to 44 (RNHDYRGRKGDE). A phosphoserine mark is found at S46 and S53. T56 is subject to Phosphothreonine. Polar residues predominate over residues 67–85 (STHSEQSILSSISLKSMVN). Residues S73, S113, S124, S148, S165, and S174 each carry the phosphoserine modification. 2 disordered regions span residues 123 to 181 (NSAE…VSRG) and 224 to 254 (SSNLRLSKENKAKESSSSSTSSVSSSSTSKV). The segment covering 238–254 (SSSSSTSSVSSSSTSKV) has biased composition (low complexity). S300, S309, and S381 each carry phosphoserine. Residues 304–440 (LPQPASSTNL…PTISNRNSAR (137 aa)) form a required for interaction with TORC1 region. The FYVE-type; atypical zinc-finger motif lies at 452-527 (DSKRNSCRYC…ICDDCLVEYE (76 aa)). Zn(2+)-binding residues include C458, C461, C474, C477, C482, H485, C519, and C522. Disordered regions lie at residues 534 to 557 (HNANTNEDNINVEEGEDDDNDNRK) and 570 to 623 (ALFR…GSVI). Acidic residues-rich tracts occupy residues 543 to 553 (INVEEGEDDDN) and 601 to 616 (EEADNENTGGEQEEGN). The may be required for TORC1 activation stretch occupies residues 620–635 (GSVIGSVPANWNWSSF).

As to quaternary structure, interacts with the TORC1 complex when activated by glutamine or cysteine. Interacts with TOR1; glutamine enhances the interaction. Interacts with KOG1; glutamine enhances the interaction. Interacts with TCO89. Interacts with LST8; glutamine enhances the interaction. Interacts with TOR2; glutamine enhances the interaction.

The protein resides in the vacuole membrane. Its activity is regulated as follows. Activated by glutamine. May also be activated by cysteine. In terms of biological role, functions as an intracellular glutamine sensor that directly activates the TORC1 signaling pathway, to promote cell growth when glutamine is available. May play a role in repressing NPR1 activity independently of TORC1 signaling. This is Glutamine sensor PIB2 from Saccharomyces cerevisiae (strain ATCC 204508 / S288c) (Baker's yeast).